The sequence spans 498 residues: Nucleoprotein (498 aa).

Residues 1–18 (MASQGTKRSYEQMETDGE) carry the Unconventional nuclear localization signal motif. The interval 1–21 (MASQGTKRSYEQMETDGERQN) is disordered. The span at 8–21 (RSYEQMETDGERQN) shows a compositional bias: basic and acidic residues. Positions 198 to 216 (KRGINDRNFWRGENGRKTR) match the Bipartite nuclear localization signal motif.

Belongs to the influenza viruses nucleoprotein family. Homomultimerizes to form the nucleocapsid. May bind host exportin-1/XPO1. Binds to viral genomic RNA. Protein-RNA contacts are mediated by a combination of electrostatic interactions between positively charged residues and the phosphate backbone and planar interactions between aromatic side chains and bases. In terms of processing, late in virus-infected cells, may be cleaved from a 56-kDa protein to a 53-kDa protein by a cellular caspase. This cleavage might be a marker for the onset of apoptosis in infected cells or have a specific function in virus host interaction.

The protein resides in the virion. It localises to the host nucleus. In terms of biological role, encapsidates the negative strand viral RNA, protecting it from nucleases. The encapsidated genomic RNA is termed the ribonucleoprotein (RNP) and serves as template for transcription and replication. The RNP needs to be localized in the host nucleus to start an infectious cycle, but is too large to diffuse through the nuclear pore complex. NP comprises at least 2 nuclear localization signals that are responsible for the active RNP import into the nucleus through cellular importin alpha/beta pathway. Later in the infection, nclear export of RNPs are mediated through viral proteins NEP interacting with M1 which binds nucleoproteins. It is possible that nucleoprotein binds directly host exportin-1/XPO1 and plays an active role in RNPs nuclear export. M1 interaction with RNP seems to hide nucleoprotein's nuclear localization signals. Soon after a virion infects a new cell, M1 dissociates from the RNP under acidification of the virion driven by M2 protein. Dissociation of M1 from RNP unmasks nucleoprotein's nuclear localization signals, targeting the RNP to the nucleus. The protein is Nucleoprotein of Influenza A virus (strain A/China:Nanchang/11/1996 H1N1).